A 339-amino-acid chain; its full sequence is MAKRHLTRRQSWRIEKIQEERAARAARRELRAVDELEGGDLGPEQTGQVIAHFGVQVEVESADGQVSRCHLRANLPALVTGDQVVWRAGNQGIGVIVAQLPRRSELCRPDMRGLLKPVAANVDRIVIVFAPRPEPHANLIDRYLIAAEHAGIQPLLLLNKADLVDESNAEGIDALLNVYRTLGYPLIEVSAFNGLAMDELRGALDGHVSVFVGQSGVGKSSLVNALLPGVDTRVGDLSTVTGKGTHTTTTARLFHFPGGGDLIDSPGIREFGLGHVSRDDVEAGFIEFRDLLGHCRFRDCKHDREPGCALLQALEDGRIMPQRMASYRHILASMPETDY.

In terms of domain architecture, CP-type G spans 111–271 (MRGLLKPVAA…LIDSPGIREF (161 aa)). GTP is bound by residues 159 to 162 (NKAD) and 213 to 221 (GQSGVGKSS). Cys-295, Cys-300, His-302, and Cys-308 together coordinate Zn(2+).

The protein belongs to the TRAFAC class YlqF/YawG GTPase family. RsgA subfamily. In terms of assembly, monomer. Associates with 30S ribosomal subunit, binds 16S rRNA. It depends on Zn(2+) as a cofactor.

The protein localises to the cytoplasm. Its function is as follows. One of several proteins that assist in the late maturation steps of the functional core of the 30S ribosomal subunit. Helps release RbfA from mature subunits. May play a role in the assembly of ribosomal proteins into the subunit. Circularly permuted GTPase that catalyzes slow GTP hydrolysis, GTPase activity is stimulated by the 30S ribosomal subunit. In Pseudomonas aeruginosa (strain UCBPP-PA14), this protein is Small ribosomal subunit biogenesis GTPase RsgA.